A 60-amino-acid polypeptide reads, in one-letter code: Stress response protein YkoL (60 aa).

The chain is Stress response protein YkoL (ykoL) from Bacillus subtilis (strain 168).